Consider the following 663-residue polypeptide: Putative ankyrin repeat protein R219 (663 aa).

5 ANK repeats span residues 91-118 (FRIKKLHVQIMLKEYDKIEFLINSGYKV), 119-148 (DFDSLKLACLNGSLDILNLLLKFYQKKLSS), 200-229 (ANQQVMENAFKTNHTDIINLLLIRAKKDGT), 258-288 (DWHVELYYSALLSGSMEMITYLEDKIDKINP), and 322-351 (YFSHTMNYAIQSGSVNVVDYIWSRGYGITV).

This is Putative ankyrin repeat protein R219 from Acanthamoeba polyphaga mimivirus (APMV).